A 422-amino-acid polypeptide reads, in one-letter code: Hispidin-3-hydroxylase (422 aa).

Residues 6 to 26 form a helical membrane-spanning segment; sequence NSLSVLIVGAGLGGLAAAIAL. Ala50, Arg108, and Asp318 together coordinate FAD.

This sequence belongs to the paxM FAD-dependent monooxygenase family. As to quaternary structure, monomer. It depends on FAD as a cofactor.

It localises to the membrane. It carries out the reaction hispidin + NADH + O2 + H(+) = 3-hydroxyhispidin + NAD(+) + H2O. It catalyses the reaction hispidin + NADPH + O2 + H(+) = 3-hydroxyhispidin + NADP(+) + H2O. Its pathway is secondary metabolite biosynthesis. Functionally, hispidin-3-hydroxylase; part of the gene cluster that mediates the fungal bioluminescence cycle. Hydroxylates hispidin in order to produce the fungal luciferin 3-hydroxyhispidin. The fungal bioluminescence cycle begins with the hispidin synthetase that catalyzes the formation of hispidin which is further hydroxylated by the hispidin-3-hydroxylase, yielding the fungal luciferin 3-hydroxyhispidin. The luciferase then produces an endoperoxide as a high-energy intermediate with decomposition that yields oxyluciferin (also known as caffeoylpyruvate) and light emission. Oxyluciferin can be recycled to caffeic acid by caffeoylpyruvate hydrolase. This Neonothopanus nambi (Agaricus nambi) protein is Hispidin-3-hydroxylase.